The chain runs to 428 residues: Isocitrate dehydrogenase [NADP], mitochondrial (428 aa).

The N-terminal 16 residues, 1–16 (MSMLSRRLFSTSRLAA), are a transit peptide targeting the mitochondrion. NADP(+) contacts are provided by residues 91–93 (TIT) and R98. T93 serves as a coordination point for substrate. Residues 110 to 116 (SPNGTIR), R125, and R148 each bind substrate. D269 provides a ligand contact to Mn(2+). K277 serves as a coordination point for NADP(+). D292 is a Mn(2+) binding site. Residues 327-332 (GTVTRH) and N345 each bind NADP(+).

It belongs to the isocitrate and isopropylmalate dehydrogenases family. In terms of assembly, homodimer. It depends on Mg(2+) as a cofactor. Requires Mn(2+) as cofactor.

The protein resides in the mitochondrion. It carries out the reaction D-threo-isocitrate + NADP(+) = 2-oxoglutarate + CO2 + NADPH. Its activity is regulated as follows. The enzyme is subject to end product inhibition by NADPH and 2-oxoglutarate. In terms of biological role, mitochondrial IDP1 may regulate flux through the tricarboxylic acid cycle and respiration. Its probably critical function is the production of NADPH. The sequence is that of Isocitrate dehydrogenase [NADP], mitochondrial (IDP1) from Saccharomyces cerevisiae (strain ATCC 204508 / S288c) (Baker's yeast).